The following is a 147-amino-acid chain: Large ribosomal subunit protein uL13 (147 aa).

The tract at residues 126-147 is disordered; that stretch reads AGPTHPHQAQQPVPYEIKQVAQ.

Belongs to the universal ribosomal protein uL13 family. Part of the 50S ribosomal subunit.

Functionally, this protein is one of the early assembly proteins of the 50S ribosomal subunit, although it is not seen to bind rRNA by itself. It is important during the early stages of 50S assembly. This is Large ribosomal subunit protein uL13 from Parafrankia sp. (strain EAN1pec).